We begin with the raw amino-acid sequence, 64 residues long: U9-ctenitoxin-Pr1a (64 aa).

5 disulfides stabilise this stretch: Cys3/Cys15, Cys9/Cys24, Cys14/Cys47, Cys34/Cys55, and Cys49/Cys61.

As to expression, expressed by the venom gland.

Its subcellular location is the secreted. Non-toxic to mice and insects. The sequence is that of U9-ctenitoxin-Pr1a from Phoneutria reidyi (Brazilian Amazonian armed spider).